The chain runs to 199 residues: Recombination protein RecR (199 aa).

The C4-type zinc-finger motif lies at 57 to 72 (CQSCRTYTEESLCPIC). One can recognise a Toprim domain in the interval 81–176 (STICVVETPA…VISRIAHGVP (96 aa)).

Belongs to the RecR family.

In terms of biological role, may play a role in DNA repair. It seems to be involved in an RecBC-independent recombinational process of DNA repair. It may act with RecF and RecO. The polypeptide is Recombination protein RecR (Shewanella sp. (strain ANA-3)).